We begin with the raw amino-acid sequence, 341 residues long: MTIAITGGGTGGHLTIAKILAYELKKRGLKTIFIGSTNGQDMLWFENSVLFDEKYFLKSSGVVNKKGISRILSLFKILALSFGCRKIFAKHDVKAVISVGGYSSAPAAFWAVANKIPLFIHEQNAEIGKINALLKRFAKRFYSSYFEPKFDYPIDEIFLKTARIRREVKTVMFLGGSQGANFINELAVKLAPHLAEFGYKIIHQCGEANEAKMREIYKKESINVELIGFSKMLHKFVESADLCISRSGASTLWELAANAVPAVFIPFPYAAGDHQYYNAKFLEQFCKIVRQSDADEERIFSIIQNFDVKAASIGLKKLIKPDGAKKIVDDIIENLKNEDKK.

UDP-N-acetyl-alpha-D-glucosamine is bound by residues 10-12 (TGG), asparagine 124, serine 177, and glutamine 275.

This sequence belongs to the glycosyltransferase 28 family. MurG subfamily.

The protein resides in the cell inner membrane. The catalysed reaction is di-trans,octa-cis-undecaprenyl diphospho-N-acetyl-alpha-D-muramoyl-L-alanyl-D-glutamyl-meso-2,6-diaminopimeloyl-D-alanyl-D-alanine + UDP-N-acetyl-alpha-D-glucosamine = di-trans,octa-cis-undecaprenyl diphospho-[N-acetyl-alpha-D-glucosaminyl-(1-&gt;4)]-N-acetyl-alpha-D-muramoyl-L-alanyl-D-glutamyl-meso-2,6-diaminopimeloyl-D-alanyl-D-alanine + UDP + H(+). The protein operates within cell wall biogenesis; peptidoglycan biosynthesis. Functionally, cell wall formation. Catalyzes the transfer of a GlcNAc subunit on undecaprenyl-pyrophosphoryl-MurNAc-pentapeptide (lipid intermediate I) to form undecaprenyl-pyrophosphoryl-MurNAc-(pentapeptide)GlcNAc (lipid intermediate II). This chain is UDP-N-acetylglucosamine--N-acetylmuramyl-(pentapeptide) pyrophosphoryl-undecaprenol N-acetylglucosamine transferase, found in Campylobacter hominis (strain ATCC BAA-381 / DSM 21671 / CCUG 45161 / LMG 19568 / NCTC 13146 / CH001A).